Here is a 1440-residue protein sequence, read N- to C-terminus: Bridge-like lipid transfer protein family member 3A (1440 aa).

Residues 3-95 enclose the Chorein N-terminal domain; it reads GIIKKQILKH…KVEVEMKTCE (93 aa). 3 disordered regions span residues 267–307, 430–456, and 751–780; these read SAHQ…NSSS, ADSL…FQPP, and KPSA…TEHD. The span at 287 to 307 shows a compositional bias: low complexity; it reads SAQQSWAQAFGGSQGNSNSSS. Residues Ser-444, Ser-446, Ser-755, and Ser-758 each carry the phosphoserine modification. The stretch at 837–860 forms a coiled coil; sequence ALLRLKEVLQRLQEQLTKDTESMT. Positions 891 to 1008 are disordered; that stretch reads VDADSAGSDS…ETAVNGQGEL (118 aa). Positions 911–920 are enriched in basic and acidic residues; sequence SEDRELKSDA. Residues 985 to 995 show a composition bias toward low complexity; sequence ASSSPAALKPP. Residues Ser-988, Ser-1103, and Ser-1106 each carry the phosphoserine modification. The tract at residues 1106 to 1180 is disordered; the sequence is SFDGVSLDSS…SPAANSSVSP (75 aa). Over residues 1134–1150 the composition is skewed to low complexity; that stretch reads LLESESGPESVPPGSLS. Residues 1151–1180 are compositionally biased toward polar residues; that stretch reads NVSDNAGVQGSPLVNNYGQGSPAANSSVSP. Positions 1401–1435 form a coiled coil; it reads KELPILQKELIETKQALANANQDKEKLLQEIRKYN.

As to quaternary structure, homodimer (Potential). Interacts with UHRF1.

Its subcellular location is the late endosome. Its function is as follows. Tube-forming lipid transport protein which probably mediates the transfer of lipids between membranes at organelle contact sites. May be involved in the retrograde traffic of vesicle clusters in the endocytic pathway to the Golgi complex. The protein is Bridge-like lipid transfer protein family member 3A of Homo sapiens (Human).